Consider the following 235-residue polypeptide: Phosphoribosylaminoimidazole-succinocarboxamide synthase (235 aa).

It belongs to the SAICAR synthetase family.

It carries out the reaction 5-amino-1-(5-phospho-D-ribosyl)imidazole-4-carboxylate + L-aspartate + ATP = (2S)-2-[5-amino-1-(5-phospho-beta-D-ribosyl)imidazole-4-carboxamido]succinate + ADP + phosphate + 2 H(+). The protein operates within purine metabolism; IMP biosynthesis via de novo pathway; 5-amino-1-(5-phospho-D-ribosyl)imidazole-4-carboxamide from 5-amino-1-(5-phospho-D-ribosyl)imidazole-4-carboxylate: step 1/2. This Clostridium novyi (strain NT) protein is Phosphoribosylaminoimidazole-succinocarboxamide synthase.